The chain runs to 245 residues: Collagen triple helix repeat-containing protein 1 (245 aa).

Residues 1–32 (MHPQGRAASPQLLLGLFLVLLLLLQLSAPSSA) form the signal peptide. The region spanning 59-92 (QGPAGVPGRDGSPGANGIPGTPGIPGRDGFKGEK) is the Collagen-like domain. Residues 64-87 (VPGRDGSPGANGIPGTPGIPGRDG) form a disordered region. N-linked (GlcNAc...) asparagine glycosylation occurs at N188.

N-glycosylated. Expressed after injury in the carotid arteries (at protein level). Expressed in brain, lung, and after injury in fibroblasts of the adventitia and the neointima of the arteries.

The protein localises to the secreted. Its subcellular location is the extracellular space. The protein resides in the extracellular matrix. In terms of biological role, its overexpression in smooth muscle cell lines increases their migratory ability and inhibits collagen type I expression. May act as a negative regulator of collagen matrix deposition. The polypeptide is Collagen triple helix repeat-containing protein 1 (Cthrc1) (Rattus norvegicus (Rat)).